The sequence spans 275 residues: MALLKSKPTSPGKRGEIRVVHHDIYKGKPHAALVEKLKKTGGRNNQGRITVRHIGGGQRQKYRIIDFKRNKDGILGRVERLEYDPNRTALIALISYKDGEKRYIIAPSNLEVGATIQSGADSPISVGNCLPLKNIPVGTTIHCVEMKPGKGAQMLRSAGCSGQLVAKEGVYATLRLRSGEMRKIHVLCRAVIGEVSNSEHNLRALGKAGAKRWRGIRPTVRGVAMNPVDHPHGGGEGRTSGGRHPVSPWGLPTKGYKTRSNKRTDTFIVRGRKKK.

The segment at valine 223–serine 260 is disordered.

It belongs to the universal ribosomal protein uL2 family. As to quaternary structure, part of the 50S ribosomal subunit. Forms a bridge to the 30S subunit in the 70S ribosome.

One of the primary rRNA binding proteins. Required for association of the 30S and 50S subunits to form the 70S ribosome, for tRNA binding and peptide bond formation. It has been suggested to have peptidyltransferase activity; this is somewhat controversial. Makes several contacts with the 16S rRNA in the 70S ribosome. This is Large ribosomal subunit protein uL2 from Legionella pneumophila (strain Paris).